The following is a 597-amino-acid chain: Arginine--tRNA ligase (597 aa).

The short motif at 138-148 (ANPTGPMHVGH) is the 'HIGH' region element.

Belongs to the class-I aminoacyl-tRNA synthetase family. As to quaternary structure, monomer.

Its subcellular location is the cytoplasm. The catalysed reaction is tRNA(Arg) + L-arginine + ATP = L-arginyl-tRNA(Arg) + AMP + diphosphate. The polypeptide is Arginine--tRNA ligase (Rhodopseudomonas palustris (strain HaA2)).